Here is an 853-residue protein sequence, read N- to C-terminus: EF-hand domain-containing family member B (853 aa).

Disordered regions lie at residues 1–31 and 244–266; these read MCSFVRVGSPKPLQTSASPLEMSSLRRTRAP and AQQPEEKKEPGSTEPGVEPPGNI. 2 consecutive EF-hand domains span residues 581-616 and 617-652; these read QNFDTLQVAFRHYDKKGDGVIDRAELHEACVQANLH and LDKMLLDHLFDYCDVDQDGLINYLEFANFLNWKDRI. Residues D594, D598, E605, D630, D632, D634, and E641 each contribute to the Ca(2+) site.

As to quaternary structure, microtubule inner protein component of sperm flagellar doublet microtubules. Interacts with STIM1 and ORAI1; the interactions take place upon Ca(2+)-store depletion and dissociate through a Ca(2+)-dependent mechanism. Interaction with STIM1 inhibits STIM1 interaction with SARAF.

Its subcellular location is the cytoplasm. The protein localises to the cytoskeleton. It localises to the cilium axoneme. It is found in the flagellum axoneme. Functionally, microtubule inner protein (MIP) part of the dynein-decorated doublet microtubules (DMTs) in cilia axoneme, which is required for motile cilia beating. Cytosolic sensor for calcium, modulates the interaction of STIM1 and ORAI1 upon store depletion and the activation of store-operated Ca(2+) entry (SOCE) and NFAT translocation from cytosol to nucleus. This Mus musculus (Mouse) protein is EF-hand domain-containing family member B.